The primary structure comprises 991 residues: MSSLALSQLLLAVTLPLLELEPTFVPTAQSELSPYGGKSGQQLNQYSGEGESVLVSSYVHLEFSSTAWPQELSKNFTLPTALAVLPPKTLTGLGLTTECRANHSGTSLCTCHPGYQWNATLCSLYPHCWGRRSERDSCMCRSFHGPVTGYCQLLPPVPANLILDSQLQMHGNTLNLILLKKEEATNLRWFLRHSKNHTPISLWPGTNVLQTSSEGQSGLRVARMSRHWAGEYESIFEAQGFRWRLRQLVKVPLQEEEVVRLPDALSISCTASTGFQLSCCIPLTTDYTATWSPGEDSQASLQKMSDSQCFVLAVPHCPATNTTYTCTLQSQNLPPLVAPVSITIIQDGDTTCPEDFSVVSWNVTKAGFVAQAPCPVNKKGVVKRLCGTDGIWRPVQNTCTEAKILTLCLKAKLLEGQGKPYEEVPWILSELQEQVGVASTPSDLWEMLHTVTLLAKVVAETSTELTGSALKDLLTTTDKILDANISALWTLAQAQEPSMGSDFLKAVETLVHSLRPQQHPFSFSSANVLLQSQLLRHSSPPGYQMSFSTWPLLQARIPWHSLAPLVHSGTNVSITSLVLQKLDYRLPSNYTQGLWNTPYTTPGLILVVSITADGQAFTQAEVIMDYEDMNGTLHCVFWDHRVFQGQGGWSDEGCEVHAANASITQCICQHLTAFSILMSQHTVPENPTLDLLSQVGTGASVLALLVCLAIYGLVWRVVVRNKVAFFRHTTLFNMVICLLVADTCFLGSPFLPSGYHSLICLVTAFLCHFFYLATFFWMLAQALVLAHQLLFVFHQLSKHVVLSLMVMLGYLCPLGFAGVTLGLYLPQRKYLWEGKCFLNGGGVMLYSFSEPVLAIVGVNGLVLVIAVLKLLRPSLSEGPTVEKRQALVGVLKALLILTPIFGLTWGLGVATLFDGSIVSHYAFSILNSLQGVFILVFGCLTDKKVLEALRKRLRGSRSSNSAISMVTNETYTSEHSKERSEPASYEERMTD.

The N-terminal stretch at 1–20 (MSSLALSQLLLAVTLPLLEL) is a signal peptide. The Extracellular portion of the chain corresponds to 21–694 (EPTFVPTAQS…ENPTLDLLSQ (674 aa)). 10 N-linked (GlcNAc...) asparagine glycosylation sites follow: Asn-75, Asn-102, Asn-118, Asn-321, Asn-362, Asn-484, Asn-571, Asn-589, Asn-630, and Asn-660. The GAIN-B domain maps to 519-684 (HPFSFSSANV…SILMSQHTVP (166 aa)). 2 cysteine pairs are disulfide-bonded: Cys-635-Cys-666 and Cys-654-Cys-668. The segment at 635–684 (CVFWDHRVFQGQGGWSDEGCEVHAANASITQCICQHLTAFSILMSQHTVP) is GPS. The chain crosses the membrane as a helical span at residues 695-715 (VGTGASVLALLVCLAIYGLVW). The Cytoplasmic portion of the chain corresponds to 716-730 (RVVVRNKVAFFRHTT). The helical transmembrane segment at 731–751 (LFNMVICLLVADTCFLGSPFL) threads the bilayer. Over 752–757 (PSGYHS) the chain is Extracellular. The helical transmembrane segment at 758 to 778 (LICLVTAFLCHFFYLATFFWM) threads the bilayer. At 779–799 (LAQALVLAHQLLFVFHQLSKH) the chain is on the cytoplasmic side. Residues 800–820 (VVLSLMVMLGYLCPLGFAGVT) form a helical membrane-spanning segment. Over 821-850 (LGLYLPQRKYLWEGKCFLNGGGVMLYSFSE) the chain is Extracellular. Residues 851 to 871 (PVLAIVGVNGLVLVIAVLKLL) form a helical membrane-spanning segment. Residues 872–892 (RPSLSEGPTVEKRQALVGVLK) are Cytoplasmic-facing. Residues 893 to 913 (ALLILTPIFGLTWGLGVATLF) form a helical membrane-spanning segment. Residues 914–916 (DGS) lie on the Extracellular side of the membrane. Residues 917–937 (IVSHYAFSILNSLQGVFILVF) traverse the membrane as a helical segment. Over 938-991 (GCLTDKKVLEALRKRLRGSRSSNSAISMVTNETYTSEHSKERSEPASYEERMTD) the chain is Cytoplasmic. The disordered stretch occupies residues 964–991 (SMVTNETYTSEHSKERSEPASYEERMTD). Basic and acidic residues predominate over residues 972 to 991 (TSEHSKERSEPASYEERMTD).

It belongs to the G-protein coupled receptor 2 family. Adhesion G-protein coupled receptor (ADGR) subfamily. Heterodimer of 2 chains generated by proteolytic processing; the large extracellular N-terminal fragment and the membrane-bound C-terminal fragment predominantly remain associated and non-covalently linked. Autoproteolytically processed at the GPS region of the GAIN-B domain; this cleavage modulates receptor activity. Expression is restricted to testis and circumvallate papillae.

The protein resides in the membrane. In terms of biological role, orphan receptor. The polypeptide is Adhesion G-protein coupled receptor F3 (ADGRF3) (Mus musculus (Mouse)).